Consider the following 317-residue polypeptide: Carbonic anhydrase 5B, mitochondrial (317 aa).

Residues 1 to 33 constitute a mitochondrion transit peptide; sequence MTVMSHLRVSLQVSSCTLLWRRFRVPRLVPLRS. The region spanning 37–296 is the Alpha-carbonic anhydrase domain; the sequence is YTCTYRTRNR…LMNRTVRSSF (260 aa). Residues His-130, His-132, and His-155 each contribute to the Zn(2+) site. Residue 235–236 participates in substrate binding; that stretch reads TT.

This sequence belongs to the alpha-carbonic anhydrase family. Zn(2+) is required as a cofactor.

The protein localises to the mitochondrion. It catalyses the reaction hydrogencarbonate + H(+) = CO2 + H2O. Mitochondrial carbonic anhydrase that catalyzes the reversible conversion of carbon dioxide to bicarbonate/HCO3. In Rattus norvegicus (Rat), this protein is Carbonic anhydrase 5B, mitochondrial (Ca5b).